A 942-amino-acid polypeptide reads, in one-letter code: DNA mismatch repair protein MSH2 (942 aa).

Position 667–674 (Gly-667–Ser-674) interacts with ATP.

This sequence belongs to the DNA mismatch repair MutS family. As to quaternary structure, heterodimer of MSH2 and MSH6 (GTBP).

The protein resides in the nucleus. In terms of biological role, involved in postreplication mismatch repair. Binds specifically to DNA containing mismatched nucleotides thus providing a target for the excision repair processes characteristic of postreplication mismatch repair. The polypeptide is DNA mismatch repair protein MSH2 (MUS1) (Zea mays (Maize)).